Consider the following 289-residue polypeptide: 2-hydroxy-6-oxononadienedioate/2-hydroxy-6-oxononatrienedioate hydrolase 1 (289 aa).

Positions 39 to 275 (TVVMLHGSGP…RCGHWAQWEH (237 aa)) constitute an AB hydrolase-1 domain. The active-site Proton acceptor is histidine 269.

It belongs to the AB hydrolase superfamily. MhpC family. Homodimer.

It carries out the reaction (2Z,4E)-2-hydroxy-6-oxonona-2,4-dienedioate + H2O = (2Z)-2-hydroxypenta-2,4-dienoate + succinate + H(+). It catalyses the reaction (2Z,4E,7E)-2-hydroxy-6-oxonona-2,4,7-trienedioate + H2O = (2Z)-2-hydroxypenta-2,4-dienoate + fumarate + H(+). Its pathway is aromatic compound metabolism; 3-phenylpropanoate degradation. Functionally, catalyzes the cleavage of the C5-C6 bond of 2-hydroxy-6-oxononadienedioate and 2-hydroxy-6-oxononatrienedioate, a dienol ring fission product of the bacterial meta-cleavage pathway for degradation of phenylpropionic acid. The protein is 2-hydroxy-6-oxononadienedioate/2-hydroxy-6-oxononatrienedioate hydrolase 1 of Dechloromonas aromatica (strain RCB).